The chain runs to 448 residues: FAD-linked oxidoreductase nodO (448 aa).

Residues 35 to 206 enclose the FAD-binding PCMH-type domain; sequence PEHFPLAIVK…IRFFLKTCPL (172 aa).

The protein belongs to the oxygen-dependent FAD-linked oxidoreductase family. The cofactor is FAD.

It participates in secondary metabolite biosynthesis. Functionally, FAD-linked oxidoreductase; part of the gene cluster that mediates the biosynthesis of the indole diterpenes nodulisporic acids (NA). Nodulisporic acid A (NAA) and its chemically modified derivatives are of particular significance because of their highly potent insecticidal activity against blood-feeding arthropods and lack of observable adverse effects on mammals, in particular the tremogenicity associated with the paspaline-derived IDTs is not observed. The geranylgeranyl diphosphate (GGPP) synthase ggs1, localized outside of the cluster, is proposed to catalyze the first step in nodulisporic acid biosynthesis via conversion of farnesyl pyrophosphate and isopentyl pyrophosphate into geranylgeranyl pyrophosphate (GGPP). Condensation of indole-3-glycerol phosphate with GGPP by the prenyl transferase nodC then forms 3-geranylgeranylindole (3-GGI). Epoxidation by the FAD-dependent monooxygenase nodM leads to a single-epoxidized-GGI that is substrate of the terpene cyclase nodB for cyclization to yield emindole SB. The terminal methyl carbon, C28, of emindole SB is then oxidized by the cytochrome P450 monooxygenase nodW to produce nodulisporic acid F (NAF), the pentacyclic core of NAA. NAF is converted to nodulisporic acid E (NAE) via prenylation. This step is probably performed by one of the indole diterpene prenyltransferases nodD1 or nodD2. Several oxidation steps performed by the FAD-linked oxidoreductase nodO and one of the cytochrome P450 monooxygenase nodR, nodX or nodZ further convert NAE to nodulisporic acid D (NAD). NAD is substrate of cytochrome P450 monooxygenase nodJ to produce the precursor of nodulisporic acid C (NAC), converted to NAC by one of the indole diterpene prenyltransferases nodD1 or nodD2. The FAD-dependent monooxygenase nodY2 then oxidizes NAC to nodulisporic acid B (NAB). Finally NAB is converted to NAA by one of the cytochrome P450 monooxygenases nodR, nodX or nodZ. This Hypoxylon pulicicidum protein is FAD-linked oxidoreductase nodO.